The chain runs to 237 residues: AA9 family lytic polysaccharide monooxygenase C (237 aa).

The signal sequence occupies residues 1–15 (MKVLAPLILAGAASA). Cu(2+)-binding residues include His16 and His99. Disulfide bonds link Cys54/Cys185 and Cys155/Cys237. Asn112 is a glycosylation site (N-linked (GlcNAc...) asparagine). O2 is bound by residues His171 and Gln180. Tyr182 is a binding site for Cu(2+).

It belongs to the polysaccharide monooxygenase AA9 family. It depends on Cu(2+) as a cofactor.

The protein resides in the secreted. The enzyme catalyses [(1-&gt;4)-beta-D-glucosyl]n+m + reduced acceptor + O2 = 4-dehydro-beta-D-glucosyl-[(1-&gt;4)-beta-D-glucosyl]n-1 + [(1-&gt;4)-beta-D-glucosyl]m + acceptor + H2O.. Is able to utilize various natural phenolic compounds as reducing agents. Most of these reducing agents are present in plants, either free or as lignin building blocks, such as sinapic acid, or as flavonoids such as catechin and dopamine. Phenolic compounds with 1,2-benzenediol and 1,2,3-benzenetriol moieties yield the highest release of oxidized and non-oxidized glucooligosaccharides from cellulose compared to monophenols or sulfur-containing compounds. Its function is as follows. Lytic polysaccharide monooxygenase (LPMO) that depolymerizes crystalline and amorphous polysaccharides via the oxidation of scissile alpha- or beta-(1-4)-glycosidic bonds, yielding C4 oxidation products. Catalysis by LPMOs requires the reduction of the active-site copper from Cu(II) to Cu(I) by a reducing agent and H(2)O(2) or O(2) as a cosubstrate. Shows oxidative cleavage of beta-(1-3, 1-4)-glucan from oat spelt or xyloglucan from tamarind seed, in addition to cellulose. The polypeptide is AA9 family lytic polysaccharide monooxygenase C (Thermothelomyces thermophilus (strain ATCC 42464 / BCRC 31852 / DSM 1799) (Sporotrichum thermophile)).